The chain runs to 190 residues: Protein shisa-like-2A (190 aa).

The next 2 membrane-spanning stretches (helical) occupy residues 48-68 (SFFP…LIGL) and 70-90 (VAAV…YLFI).

The protein belongs to the shisa family.

It is found in the membrane. The protein is Protein shisa-like-2A of Homo sapiens (Human).